We begin with the raw amino-acid sequence, 222 residues long: Protein DEHYDRATION-INDUCED 19 homolog 6 (222 aa).

S116 bears the Phosphoserine mark.

The protein belongs to the Di19 family. Phosphorylated in vitro by CPK3 or CPK11. Expressed in seedlings, roots, leaves, stems, flowers and siliques.

It is found in the nucleus. This is Protein DEHYDRATION-INDUCED 19 homolog 6 (DI19-6) from Arabidopsis thaliana (Mouse-ear cress).